Reading from the N-terminus, the 277-residue chain is Pantothenate synthetase (277 aa).

Residue 26 to 33 (MGNLHEGH) participates in ATP binding. The Proton donor role is filled by His-33. Gln-57 lines the (R)-pantoate pocket. Residue Gln-57 participates in beta-alanine binding. Position 144–147 (144–147 (GKKD)) interacts with ATP. Residue Gln-150 coordinates (R)-pantoate. ATP-binding positions include Gly-173 and 181–184 (LSSR).

The protein belongs to the pantothenate synthetase family. Homodimer.

The protein localises to the cytoplasm. It catalyses the reaction (R)-pantoate + beta-alanine + ATP = (R)-pantothenate + AMP + diphosphate + H(+). Its pathway is cofactor biosynthesis; (R)-pantothenate biosynthesis; (R)-pantothenate from (R)-pantoate and beta-alanine: step 1/1. In terms of biological role, catalyzes the condensation of pantoate with beta-alanine in an ATP-dependent reaction via a pantoyl-adenylate intermediate. The sequence is that of Pantothenate synthetase from Chromobacterium violaceum (strain ATCC 12472 / DSM 30191 / JCM 1249 / CCUG 213 / NBRC 12614 / NCIMB 9131 / NCTC 9757 / MK).